The primary structure comprises 351 residues: Uroporphyrinogen decarboxylase (351 aa).

Substrate-binding positions include 26–30, Phe45, Asp76, Tyr153, Ser208, and His323; that span reads RQAGR.

Belongs to the uroporphyrinogen decarboxylase family. In terms of assembly, homodimer.

The protein resides in the cytoplasm. It carries out the reaction uroporphyrinogen III + 4 H(+) = coproporphyrinogen III + 4 CO2. It participates in porphyrin-containing compound metabolism; protoporphyrin-IX biosynthesis; coproporphyrinogen-III from 5-aminolevulinate: step 4/4. Catalyzes the decarboxylation of four acetate groups of uroporphyrinogen-III to yield coproporphyrinogen-III. The protein is Uroporphyrinogen decarboxylase of Prochlorococcus marinus (strain SARG / CCMP1375 / SS120).